We begin with the raw amino-acid sequence, 331 residues long: Mitochondrial glycine transporter (331 aa).

Solcar repeat units lie at residues 19 to 103, 132 to 216, and 234 to 318; these read SRTT…LRQG, LSNW…LKRR, and SSSS…LILR. 6 helical membrane-spanning segments follow: residues 25–50, 78–104, 138–163, 191–214, 238–264, and 293–311; these read FAAGLCSGLTSSILLQPADLLKTRVQ, GTLPSALRTGFGSALYFTSLNALRQGL, LATGAVARTAAGFVMMPVTVLKVRYE, GFGATAARDAPYAGLYVLFYEQLK, INFVSGGLAAGLATAITNPFDAVKTRL, and GLGLRITRKALSSALAWTV.

The protein belongs to the mitochondrial carrier (TC 2.A.29) family. SLC25A38 subfamily.

It localises to the mitochondrion inner membrane. The enzyme catalyses glycine(in) = glycine(out). Mitochondrial glycine transporter that imports glycine into the mitochondrial matrix. Plays an important role in providing glycine for the first enzymatic step in heme biosynthesis, the condensation of glycine with succinyl-CoA to produce 5-aminolevulinate (ALA) in the mitochondrial matrix. The chain is Mitochondrial glycine transporter from Neosartorya fischeri (strain ATCC 1020 / DSM 3700 / CBS 544.65 / FGSC A1164 / JCM 1740 / NRRL 181 / WB 181) (Aspergillus fischerianus).